The following is a 336-amino-acid chain: MIEADRLISAGTTLPEDVADRAIRPKLLEEYVGQPQVRSQMEIFIKAAKLRGDALDHLLIFGPPGLGKTTLANIVANEMGVNLRTTSGPVLEKAGDLAAMLTNLEPHDVLFIDEIHRLSPVVEEVLYPAMEDYQLDIMIGEGPAARSIKIDLPPFTLIGATTRAGSLTSPLRDRFGIVQRLEFYQVPDLQYIVSRSARFMGLEMSDDGALEVARRARGTPRIANRLLRRVRDFAEVKHDGTISADIAAQALDMLNVDAEGFDYMDRKLLLAVIDKFFGGPVGLDNLAAAIGEERETIEDVLEPYLIQQGFLQRTPRGRMATTRAWNHFGITPPEMP.

The interval 4–184 (ADRLISAGTT…FGIVQRLEFY (181 aa)) is large ATPase domain (RuvB-L). Residues Ile23, Arg24, Gly65, Lys68, Thr69, Thr70, 131-133 (EDY), Arg174, Tyr184, and Arg221 each bind ATP. Position 69 (Thr69) interacts with Mg(2+). The segment at 185–255 (QVPDLQYIVS…IAAQALDMLN (71 aa)) is small ATPAse domain (RuvB-S). A head domain (RuvB-H) region spans residues 258 to 336 (AEGFDYMDRK…HFGITPPEMP (79 aa)). The DNA site is built by Arg294, Arg313, and Arg318.

Belongs to the RuvB family. As to quaternary structure, homohexamer. Forms an RuvA(8)-RuvB(12)-Holliday junction (HJ) complex. HJ DNA is sandwiched between 2 RuvA tetramers; dsDNA enters through RuvA and exits via RuvB. An RuvB hexamer assembles on each DNA strand where it exits the tetramer. Each RuvB hexamer is contacted by two RuvA subunits (via domain III) on 2 adjacent RuvB subunits; this complex drives branch migration. In the full resolvosome a probable DNA-RuvA(4)-RuvB(12)-RuvC(2) complex forms which resolves the HJ.

It is found in the cytoplasm. The enzyme catalyses ATP + H2O = ADP + phosphate + H(+). In terms of biological role, the RuvA-RuvB-RuvC complex processes Holliday junction (HJ) DNA during genetic recombination and DNA repair, while the RuvA-RuvB complex plays an important role in the rescue of blocked DNA replication forks via replication fork reversal (RFR). RuvA specifically binds to HJ cruciform DNA, conferring on it an open structure. The RuvB hexamer acts as an ATP-dependent pump, pulling dsDNA into and through the RuvAB complex. RuvB forms 2 homohexamers on either side of HJ DNA bound by 1 or 2 RuvA tetramers; 4 subunits per hexamer contact DNA at a time. Coordinated motions by a converter formed by DNA-disengaged RuvB subunits stimulates ATP hydrolysis and nucleotide exchange. Immobilization of the converter enables RuvB to convert the ATP-contained energy into a lever motion, pulling 2 nucleotides of DNA out of the RuvA tetramer per ATP hydrolyzed, thus driving DNA branch migration. The RuvB motors rotate together with the DNA substrate, which together with the progressing nucleotide cycle form the mechanistic basis for DNA recombination by continuous HJ branch migration. Branch migration allows RuvC to scan DNA until it finds its consensus sequence, where it cleaves and resolves cruciform DNA. This chain is Holliday junction branch migration complex subunit RuvB, found in Escherichia coli (strain ATCC 8739 / DSM 1576 / NBRC 3972 / NCIMB 8545 / WDCM 00012 / Crooks).